The primary structure comprises 244 residues: 7-cyano-7-deazaguanine synthase (244 aa).

Position 14–24 (phenylalanine 14–leucine 24) interacts with ATP. Residues cysteine 202, cysteine 217, cysteine 220, and cysteine 223 each coordinate Zn(2+).

Belongs to the QueC family. Zn(2+) is required as a cofactor.

The catalysed reaction is 7-carboxy-7-deazaguanine + NH4(+) + ATP = 7-cyano-7-deazaguanine + ADP + phosphate + H2O + H(+). It participates in purine metabolism; 7-cyano-7-deazaguanine biosynthesis. Catalyzes the ATP-dependent conversion of 7-carboxy-7-deazaguanine (CDG) to 7-cyano-7-deazaguanine (preQ(0)). This chain is 7-cyano-7-deazaguanine synthase, found in Paraburkholderia phytofirmans (strain DSM 17436 / LMG 22146 / PsJN) (Burkholderia phytofirmans).